The primary structure comprises 465 residues: Neuromedin-K receptor (465 aa).

Residues 1 to 84 (MATLPAAETW…TNQFVQPSWR (84 aa)) are Extracellular-facing. Asparagine 23, asparagine 50, and asparagine 73 each carry an N-linked (GlcNAc...) asparagine glycan. The helical transmembrane segment at 85-107 (IALWSLAYGVVVAVAVLGNLIVI) threads the bilayer. Residues 108-117 (WIILAHKRMR) are Cytoplasmic-facing. Residues 118–139 (TVTNYFLVNLAFSDASMAAFNT) form a helical membrane-spanning segment. Topologically, residues 140 to 159 (LVNFIYALHSEWYFGANYCR) are extracellular. A disulfide bridge connects residues cysteine 158 and cysteine 233. The helical transmembrane segment at 160–181 (FQNFFPITAVFASIYSMTAIAV) threads the bilayer. Over 182–201 (DRYMAIIDPLKPRLSATATK) the chain is Cytoplasmic. A helical membrane pass occupies residues 202-222 (IVIGSIWILAFLLAFPQCLYS). The Extracellular segment spans residues 223-245 (KTKVMPGRTLCFVQWPEGPKQHF). Residues 246–270 (TYHIIVIILVYCFPLLIMGITYTIV) traverse the membrane as a helical segment. Residues 271 to 299 (GITLWGGEIPGDTCDKYHEQLKAKRKVVK) lie on the Cytoplasmic side of the membrane. The chain crosses the membrane as a helical span at residues 300-321 (MMIIVVMTFAICWLPYHIYFIL). The Extracellular portion of the chain corresponds to 322-334 (TAIYQQLNRWKYI). A helical membrane pass occupies residues 335–359 (QQVYLASFWLAMSSTMYNPIIYCCL). At 360–465 (NKRFRAGFKR…SPYTSVDEYS (106 aa)) the chain is on the cytoplasmic side. A lipid anchor (S-palmitoyl cysteine) is attached at cysteine 374. The segment at 415 to 465 (PNDADTTRSSRKKRATPRDPSFNGCSRRNSKSASATSSFISSPYTSVDEYS) is disordered. Positions 445–465 (KSASATSSFISSPYTSVDEYS) are enriched in low complexity.

It belongs to the G-protein coupled receptor 1 family. Post-translationally, the anchoring of this receptor to the plasma membrane is probably mediated by the palmitoylation of a cysteine residue.

It is found in the cell membrane. This is a receptor for the tachykinin neuropeptide neuromedin-K (neurokinin B). It is associated with G proteins that activate a phosphatidylinositol-calcium second messenger system. The rank order of affinity of this receptor to tachykinins is: neuromedin-K &gt; substance K &gt; substance P. In Homo sapiens (Human), this protein is Neuromedin-K receptor (TACR3).